An 89-amino-acid polypeptide reads, in one-letter code: UPF0147 protein Saci_0891 (89 aa).

This sequence belongs to the UPF0147 family.

This Sulfolobus acidocaldarius (strain ATCC 33909 / DSM 639 / JCM 8929 / NBRC 15157 / NCIMB 11770) protein is UPF0147 protein Saci_0891.